A 749-amino-acid chain; its full sequence is Small G protein signaling modulator 3 (749 aa).

Positions 113-304 (GIPHGMRPQL…RIWDLFFYEG (192 aa)) constitute a Rab-GAP TBC domain. Residue serine 405 is modified to Phosphoserine. A coiled-coil region spans residues 414–438 (EDDLEALKAKNIKQTELVADLREAI). In terms of domain architecture, SH3 spans 479 to 538 (SHRRRAKALLDFERHDDDELGFRKNDIITIISQKDEHCWVGELNGLRGWFPAKFVEVLDE). The RUN domain occupies 554–717 (GVTDLVRGTL…FAFSLSQDWE (164 aa)).

Belongs to the small G protein signaling modulator family. Interacts with GJA1. Interaction with GJA1 induces its degradation. Interacts (via RUN domain) with NF2 (via C-terminus). Interacts with RAB3A, RAB4A, RAB5A, RAB8A, RAB11A, RAP1A, RAP1B, RAP2A, RAP2B and PDCD6I. No interaction with RAB27A. No interaction with GJB1 or GJD2. In terms of tissue distribution, expressed in brain, liver, kidney and testis. Moderately expressed in heart, very weakly in lung and muscle. Not expressed in spleen.

It is found in the cytoplasm. May play a cooperative role in NF2-mediated growth suppression of cells. May act as a modulator of small G protein RAB- and RAP-mediated neuronal signal transduction and vesicular transportation pathways. In Rattus norvegicus (Rat), this protein is Small G protein signaling modulator 3.